A 129-amino-acid chain; its full sequence is Ferredoxin-1 (129 aa).

The 2Fe-2S ferredoxin-type domain occupies 29–120; the sequence is SDMDLDDEDY…EVKIVYNAKH (92 aa). 4 residues coordinate [2Fe-2S] cluster: cysteine 64, cysteine 69, cysteine 72, and cysteine 103.

The protein belongs to the 2Fe2S plant-type ferredoxin family. [2Fe-2S] cluster serves as cofactor.

Functionally, ferredoxins are iron-sulfur proteins that transfer electrons in a wide variety of metabolic reactions. This is Ferredoxin-1 (fer1) from Haloarcula marismortui (strain ATCC 43049 / DSM 3752 / JCM 8966 / VKM B-1809) (Halobacterium marismortui).